The primary structure comprises 106 residues: ATP-dependent Clp protease adapter protein ClpS (106 aa).

This sequence belongs to the ClpS family. Binds to the N-terminal domain of the chaperone ClpA.

Involved in the modulation of the specificity of the ClpAP-mediated ATP-dependent protein degradation. The sequence is that of ATP-dependent Clp protease adapter protein ClpS from Methylococcus capsulatus (strain ATCC 33009 / NCIMB 11132 / Bath).